A 584-amino-acid chain; its full sequence is Putative poly(A) polymerase catalytic subunit (584 aa).

A compositionally biased stretch (basic and acidic residues) spans 522–531 (EAEISEKEET). Positions 522-584 (EAEISEKEET…ENSLDSLTSD (63 aa)) are disordered. Residues 546 to 569 (SPNSSPNSSPNNSLNNSIDISTNN) are compositionally biased toward low complexity.

Belongs to the poxviridae poly(A) polymerase catalytic subunit family. Highly divergent.

The protein resides in the virion. It catalyses the reaction RNA(n) + ATP = RNA(n)-3'-adenine ribonucleotide + diphosphate. Its function is as follows. Polymerase that creates the 3'-poly(A) tail of mRNA's. This chain is Putative poly(A) polymerase catalytic subunit, found in Acanthamoeba polyphaga (Amoeba).